The chain runs to 128 residues: Large ribosomal subunit protein bL12c (128 aa).

It belongs to the bacterial ribosomal protein bL12 family. In terms of assembly, homodimer. Part of the ribosomal stalk of the 50S ribosomal subunit. Forms a multimeric L10(L12)X complex, where L10 forms an elongated spine to which 2 to 4 L12 dimers bind in a sequential fashion. Binds GTP-bound translation factors.

It localises to the plastid. It is found in the chloroplast. In terms of biological role, forms part of the ribosomal stalk which helps the ribosome interact with GTP-bound translation factors. Is thus essential for accurate translation. The polypeptide is Large ribosomal subunit protein bL12c (Phaeodactylum tricornutum (strain CCAP 1055/1)).